Here is a 194-residue protein sequence, read N- to C-terminus: Imidazoleglycerol-phosphate dehydratase (194 aa).

Belongs to the imidazoleglycerol-phosphate dehydratase family.

Its subcellular location is the cytoplasm. It carries out the reaction D-erythro-1-(imidazol-4-yl)glycerol 3-phosphate = 3-(imidazol-4-yl)-2-oxopropyl phosphate + H2O. Its pathway is amino-acid biosynthesis; L-histidine biosynthesis; L-histidine from 5-phospho-alpha-D-ribose 1-diphosphate: step 6/9. This Bacillus pumilus (strain SAFR-032) protein is Imidazoleglycerol-phosphate dehydratase.